We begin with the raw amino-acid sequence, 176 residues long: SsrA-binding protein (176 aa).

Residues 1–33 (MTEAGAKKAAGKKSGKGKGKNAKKNQPNITPVA) are disordered. Over residues 9–23 (AAGKKSGKGKGKNAK) the composition is skewed to basic residues.

Belongs to the SmpB family.

The protein resides in the cytoplasm. Required for rescue of stalled ribosomes mediated by trans-translation. Binds to transfer-messenger RNA (tmRNA), required for stable association of tmRNA with ribosomes. tmRNA and SmpB together mimic tRNA shape, replacing the anticodon stem-loop with SmpB. tmRNA is encoded by the ssrA gene; the 2 termini fold to resemble tRNA(Ala) and it encodes a 'tag peptide', a short internal open reading frame. During trans-translation Ala-aminoacylated tmRNA acts like a tRNA, entering the A-site of stalled ribosomes, displacing the stalled mRNA. The ribosome then switches to translate the ORF on the tmRNA; the nascent peptide is terminated with the 'tag peptide' encoded by the tmRNA and targeted for degradation. The ribosome is freed to recommence translation, which seems to be the essential function of trans-translation. In Rhodopirellula baltica (strain DSM 10527 / NCIMB 13988 / SH1), this protein is SsrA-binding protein.